A 342-amino-acid chain; its full sequence is Phosphate acyltransferase (342 aa).

Belongs to the PlsX family. Homodimer. Probably interacts with PlsY.

Its subcellular location is the cytoplasm. It catalyses the reaction a fatty acyl-[ACP] + phosphate = an acyl phosphate + holo-[ACP]. It participates in lipid metabolism; phospholipid metabolism. Functionally, catalyzes the reversible formation of acyl-phosphate (acyl-PO(4)) from acyl-[acyl-carrier-protein] (acyl-ACP). This enzyme utilizes acyl-ACP as fatty acyl donor, but not acyl-CoA. The sequence is that of Phosphate acyltransferase from Shewanella halifaxensis (strain HAW-EB4).